A 397-amino-acid chain; its full sequence is Exodeoxyribonuclease 7 large subunit (397 aa).

It belongs to the XseA family. Heterooligomer composed of large and small subunits.

Its subcellular location is the cytoplasm. It carries out the reaction Exonucleolytic cleavage in either 5'- to 3'- or 3'- to 5'-direction to yield nucleoside 5'-phosphates.. In terms of biological role, bidirectionally degrades single-stranded DNA into large acid-insoluble oligonucleotides, which are then degraded further into small acid-soluble oligonucleotides. The polypeptide is Exodeoxyribonuclease 7 large subunit (Anaplasma marginale (strain Florida)).